A 309-amino-acid polypeptide reads, in one-letter code: Pantothenate kinase (309 aa).

92–99 (GSVAVGKS) contributes to the ATP binding site.

This sequence belongs to the prokaryotic pantothenate kinase family.

The protein resides in the cytoplasm. It catalyses the reaction (R)-pantothenate + ATP = (R)-4'-phosphopantothenate + ADP + H(+). The protein operates within cofactor biosynthesis; coenzyme A biosynthesis; CoA from (R)-pantothenate: step 1/5. This Latilactobacillus sakei subsp. sakei (strain 23K) (Lactobacillus sakei subsp. sakei) protein is Pantothenate kinase.